The primary structure comprises 113 residues: UPF0321 protein C569.02c (113 aa).

A signal peptide spans Met1 to Ala17. Asn20, Asn39, and Asn65 each carry an N-linked (GlcNAc...) asparagine glycan.

This sequence belongs to the UPF0321 family.

This chain is UPF0321 protein C569.02c, found in Schizosaccharomyces pombe (strain 972 / ATCC 24843) (Fission yeast).